We begin with the raw amino-acid sequence, 236 residues long: 2-C-methyl-D-erythritol 4-phosphate cytidylyltransferase (236 aa).

Belongs to the IspD/TarI cytidylyltransferase family. IspD subfamily.

The catalysed reaction is 2-C-methyl-D-erythritol 4-phosphate + CTP + H(+) = 4-CDP-2-C-methyl-D-erythritol + diphosphate. The protein operates within isoprenoid biosynthesis; isopentenyl diphosphate biosynthesis via DXP pathway; isopentenyl diphosphate from 1-deoxy-D-xylulose 5-phosphate: step 2/6. Its function is as follows. Catalyzes the formation of 4-diphosphocytidyl-2-C-methyl-D-erythritol from CTP and 2-C-methyl-D-erythritol 4-phosphate (MEP). The sequence is that of 2-C-methyl-D-erythritol 4-phosphate cytidylyltransferase from Burkholderia thailandensis (strain ATCC 700388 / DSM 13276 / CCUG 48851 / CIP 106301 / E264).